A 145-amino-acid chain; its full sequence is Large ribosomal subunit protein uL15 (145 aa).

The interval 1-50 (MRLNTLSPAAGSKPEKQRRGRGIGSGLGKTGGRGVKGQTSRSGGGKVRAG) is disordered. Over residues 22 to 35 (GIGSGLGKTGGRGV) the composition is skewed to gly residues.

The protein belongs to the universal ribosomal protein uL15 family. As to quaternary structure, part of the 50S ribosomal subunit.

Functionally, binds to the 23S rRNA. The sequence is that of Large ribosomal subunit protein uL15 from Aeromonas salmonicida (strain A449).